Reading from the N-terminus, the 275-residue chain is Putative phosphoenolpyruvate synthase regulatory protein (275 aa).

157–164 (GVSRCGKT) is an ADP binding site.

This sequence belongs to the pyruvate, phosphate/water dikinase regulatory protein family. PSRP subfamily.

The enzyme catalyses [pyruvate, water dikinase] + ADP = [pyruvate, water dikinase]-phosphate + AMP + H(+). It catalyses the reaction [pyruvate, water dikinase]-phosphate + phosphate + H(+) = [pyruvate, water dikinase] + diphosphate. Its function is as follows. Bifunctional serine/threonine kinase and phosphorylase involved in the regulation of the phosphoenolpyruvate synthase (PEPS) by catalyzing its phosphorylation/dephosphorylation. The polypeptide is Putative phosphoenolpyruvate synthase regulatory protein (Bordetella bronchiseptica (strain ATCC BAA-588 / NCTC 13252 / RB50) (Alcaligenes bronchisepticus)).